We begin with the raw amino-acid sequence, 344 residues long: Holliday junction branch migration complex subunit RuvB (344 aa).

The span at 1 to 25 shows a compositional bias: basic and acidic residues; sequence MTDSDPTLRPDRLPEDVQATDDRAL. Residues 1-33 form a disordered region; sequence MTDSDPTLRPDRLPEDVQATDDRALRPQSLDDF. Residues 1–186 form a large ATPase domain (RuvB-L) region; that stretch reads MTDSDPTLRP…FGIPTRLNFY (186 aa). ATP-binding positions include Leu25, Arg26, Gly67, Lys70, Thr71, Thr72, 133–135, Arg176, Tyr186, and Arg223; that span reads EDF. Thr71 contributes to the Mg(2+) binding site. The tract at residues 187-257 is small ATPAse domain (RuvB-S); that stretch reads TIAELDQIVA…IADSALTRLG (71 aa). The head domain (RuvB-H) stretch occupies residues 260–344; that stretch reads DLGLDGADRR…PKRPDQGELI (85 aa). DNA is bound by residues Arg296, Arg315, and Arg320.

This sequence belongs to the RuvB family. Homohexamer. Forms an RuvA(8)-RuvB(12)-Holliday junction (HJ) complex. HJ DNA is sandwiched between 2 RuvA tetramers; dsDNA enters through RuvA and exits via RuvB. An RuvB hexamer assembles on each DNA strand where it exits the tetramer. Each RuvB hexamer is contacted by two RuvA subunits (via domain III) on 2 adjacent RuvB subunits; this complex drives branch migration. In the full resolvosome a probable DNA-RuvA(4)-RuvB(12)-RuvC(2) complex forms which resolves the HJ.

Its subcellular location is the cytoplasm. The enzyme catalyses ATP + H2O = ADP + phosphate + H(+). Functionally, the RuvA-RuvB-RuvC complex processes Holliday junction (HJ) DNA during genetic recombination and DNA repair, while the RuvA-RuvB complex plays an important role in the rescue of blocked DNA replication forks via replication fork reversal (RFR). RuvA specifically binds to HJ cruciform DNA, conferring on it an open structure. The RuvB hexamer acts as an ATP-dependent pump, pulling dsDNA into and through the RuvAB complex. RuvB forms 2 homohexamers on either side of HJ DNA bound by 1 or 2 RuvA tetramers; 4 subunits per hexamer contact DNA at a time. Coordinated motions by a converter formed by DNA-disengaged RuvB subunits stimulates ATP hydrolysis and nucleotide exchange. Immobilization of the converter enables RuvB to convert the ATP-contained energy into a lever motion, pulling 2 nucleotides of DNA out of the RuvA tetramer per ATP hydrolyzed, thus driving DNA branch migration. The RuvB motors rotate together with the DNA substrate, which together with the progressing nucleotide cycle form the mechanistic basis for DNA recombination by continuous HJ branch migration. Branch migration allows RuvC to scan DNA until it finds its consensus sequence, where it cleaves and resolves cruciform DNA. The polypeptide is Holliday junction branch migration complex subunit RuvB (Jannaschia sp. (strain CCS1)).